Here is a 74-residue protein sequence, read N- to C-terminus: Tau-AnmTx Ueq 12-1 (74 aa).

An N-terminal signal peptide occupies residues 1–18 (MCLLMLVLGAMYVQGWHS). A propeptide spans 19-27 (AGFGKRTLK) (removed in mature form). 5 cysteine pairs are disulfide-bonded: Cys-30–Cys-37, Cys-40–Cys-71, Cys-46–Cys-64, Cys-51–Cys-72, and Cys-58–Cys-73.

Belongs to the Cnidaria small cysteine-rich protein (SCRiP) family. In terms of tissue distribution, detected in mucus secreted from ectoderm.

It is found in the secreted. Its function is as follows. Potentiates activation of mammalian TRPA1, a non-selective cation channel involved in perception of pain, in vitro yet has an analgesic and anti-inflammatory effect in vivo. Has antibacterial activity against C.glutamicum (MIC=50 uM) and, to a lesser extent, against S.aureus but not against P.aeruginosa or E.coli. This is Tau-AnmTx Ueq 12-1 from Urticina eques (Sea anemone).